We begin with the raw amino-acid sequence, 478 residues long: Vitronectin (478 aa).

Positions 1–19 are cleaved as a signal peptide; the sequence is MAPLRPFFILALVAWVSLA. Positions 20 to 63 constitute an SMB domain; the sequence is DQESCKGRCTQGFMASKKCQCDELCTYYQSCCADYMEQCKPQVT. 7 cysteine pairs are disulfide-bonded: cysteine 24/cysteine 28, cysteine 24/cysteine 40, cysteine 28/cysteine 58, cysteine 38/cysteine 40, cysteine 38/cysteine 51, cysteine 44/cysteine 50, and cysteine 51/cysteine 58. Positions 64 to 66 match the Cell attachment site motif; it reads RGD. The residue at position 69 (threonine 69) is a Phosphothreonine. 3 positions are modified to sulfotyrosine: tyrosine 75, tyrosine 78, and tyrosine 80. Residues 82–153 are disordered; the sequence is EEPKNNTNTG…QGTPEFPEEE (72 aa). Asparagine 86 carries an N-linked (GlcNAc...) asparagine glycan. The span at 86 to 99 shows a compositional bias: polar residues; it reads NNTNTGVQPENTSP. Basic and acidic residues predominate over residues 131–141; that stretch reads EQQEEILRPDT. Hemopexin repeat units follow at residues 157–201, 202–249, and 250–304; these read GKPF…VWGI, EGPI…FSGI, and PDNV…FEHF. Residues asparagine 168 and asparagine 241 are each glycosylated (N-linked (GlcNAc...) asparagine). 2 positions are modified to sulfotyrosine: tyrosine 278 and tyrosine 281. Cysteines 292 and 431 form a disulfide. Serine 311 and serine 362 each carry phosphoserine. A disordered region spans residues 359–395; sequence LSHSAQAKKQKSKRRSRKRYRSRRGRGHRRSQSSNSR. Positions 364 to 389 are enriched in basic residues; that stretch reads QAKKQKSKRRSRKRYRSRRGRGHRRS. The interval 366–399 is heparin-binding; sequence KKQKSKRRSRKRYRSRRGRGHRRSQSSNSRRSSR. Position 398 is a phosphoserine; by PKA (serine 398). A sulfotyrosine mark is found at tyrosine 416, tyrosine 419, and tyrosine 421. A Hemopexin 4 repeat occupies 420-473; the sequence is DYDMDWLVPATCEPIQSVYFFSGDKYYRVNLRTRRVDSVNPPYPRSIAQYWLGC.

In terms of assembly, interacts with SERPINE1/PAI1, insulin and C1QBP. In terms of processing, sulfated on tyrosine residues. Post-translationally, N- and O-glycosylated. It has been suggested that the active SMB domain may be permitted considerable disulfide bond heterogeneity or variability, thus two alternate disulfide patterns based on 3D structures are described with 1 disulfide bond conserved in both. In terms of tissue distribution, plasma.

Its subcellular location is the secreted. It is found in the extracellular space. Its function is as follows. Vitronectin is a cell adhesion and spreading factor found in serum and tissues. Vitronectin interact with glycosaminoglycans and proteoglycans. Is recognized by certain members of the integrin family and serves as a cell-to-substrate adhesion molecule. Inhibitor of the membrane-damaging effect of the terminal cytolytic complement pathway. This is Vitronectin (Vtn) from Mus musculus (Mouse).